We begin with the raw amino-acid sequence, 210 residues long: Uracil phosphoribosyltransferase (210 aa).

Residues Arg78, Arg103, and 130–138 contribute to the 5-phospho-alpha-D-ribose 1-diphosphate site; that span reads DPMLATGGS. Uracil is bound by residues Ile193 and 198–200; that span reads GDA. Residue Asp199 coordinates 5-phospho-alpha-D-ribose 1-diphosphate.

Belongs to the UPRTase family. Mg(2+) is required as a cofactor.

It catalyses the reaction UMP + diphosphate = 5-phospho-alpha-D-ribose 1-diphosphate + uracil. Its pathway is pyrimidine metabolism; UMP biosynthesis via salvage pathway; UMP from uracil: step 1/1. With respect to regulation, allosterically activated by GTP. Functionally, catalyzes the conversion of uracil and 5-phospho-alpha-D-ribose 1-diphosphate (PRPP) to UMP and diphosphate. In Salinibacter ruber (strain DSM 13855 / M31), this protein is Uracil phosphoribosyltransferase.